Reading from the N-terminus, the 254-residue chain is Homeobox protein BarH-like 1 (254 aa).

A disordered region spans residues 1-20 (MQRPGEPGAARFGPPEGCAD). Positions 142-201 (GRRSRTVFTELQLMGLEKRFEKQKYLSTPDRIDLAESLGLSQLQVKTWYQNRRMKWKKIV) form a DNA-binding region, homeobox. The tract at residues 204-254 (GGGLESPTKPKGRPKKNSIPTSEQLTEQERAKDAEKPAEVPGEPSDRSRED) is disordered. The segment covering 230 to 254 (EQERAKDAEKPAEVPGEPSDRSRED) has biased composition (basic and acidic residues).

It belongs to the BAR homeobox family. Widely expressed. Expressed at higher levels in testis and heart. Detected in craniofacial tissue and adult iris, but not in lymphocytes, fibroblasts, choroid retina, retinal pigment epithelium, kidney, or fetal liver.

Its subcellular location is the nucleus. Functionally, transcription factor, which is involved in craniofacial development, in odontogenesis and in stomach organogenesis. May have a role in the differentiation of molars from incisors. Plays a role in suppressing endodermal Wnt activity. Binds to a regulatory module of the NCAM promoter. In Homo sapiens (Human), this protein is Homeobox protein BarH-like 1 (BARX1).